A 502-amino-acid polypeptide reads, in one-letter code: Glycerol kinase (502 aa).

Threonine 14 is an ADP binding site. ATP is bound by residues threonine 14, threonine 15, and serine 16. Threonine 14 is a sn-glycerol 3-phosphate binding site. Arginine 18 provides a ligand contact to ADP. The sn-glycerol 3-phosphate site is built by arginine 84, glutamate 85, and tyrosine 136. The glycerol site is built by arginine 84, glutamate 85, and tyrosine 136. At histidine 232 the chain carries Phosphohistidine; by HPr. Residue aspartate 246 coordinates sn-glycerol 3-phosphate. Positions 246 and 247 each coordinate glycerol. The ADP site is built by threonine 268 and glycine 311. ATP contacts are provided by threonine 268, glycine 311, glutamine 315, and glycine 412. ADP is bound by residues glycine 412 and asparagine 416.

The protein belongs to the FGGY kinase family. In terms of assembly, homotetramer and homodimer (in equilibrium). Post-translationally, the phosphoenolpyruvate-dependent sugar phosphotransferase system (PTS), including enzyme I, and histidine-containing protein (HPr) are required for the phosphorylation, which leads to the activation of the enzyme.

It carries out the reaction glycerol + ATP = sn-glycerol 3-phosphate + ADP + H(+). The protein operates within polyol metabolism; glycerol degradation via glycerol kinase pathway; sn-glycerol 3-phosphate from glycerol: step 1/1. Activated by phosphorylation and inhibited by fructose 1,6-bisphosphate (FBP). Key enzyme in the regulation of glycerol uptake and metabolism. Catalyzes the phosphorylation of glycerol to yield sn-glycerol 3-phosphate. This Streptococcus pneumoniae (strain P1031) protein is Glycerol kinase.